Reading from the N-terminus, the 222-residue chain is Putative auxin response factor 23 (222 aa).

The segment at residues 126 to 222 (FTKVLTASDT…ETGELRVGIR (97 aa)) is a DNA-binding region (TF-B3).

Belongs to the ARF family. Homo and heterodimers.

The protein localises to the nucleus. Functionally, auxin response factors (ARFs) are transcriptional factors that binds specifically to the DNA sequence 5'-TGTCTC-3' found in the auxin-responsive promoter elements (AuxREs). Could act as transcriptional activator or repressor. Formation of heterodimers with Aux/IAA proteins may alter their ability to modulate early auxin response genes expression. This is Putative auxin response factor 23 (ARF23) from Arabidopsis thaliana (Mouse-ear cress).